A 724-amino-acid chain; its full sequence is Actin-related protein 5 (724 aa).

Disordered stretches follow at residues 358-391, 412-450, and 467-488; these read QSLR…LMNV, TTAE…ESYL, and KKRL…IGRG. The span at 414 to 446 shows a compositional bias: basic and acidic residues; the sequence is AEGRLRARQKRNEEELEKEKRNQLEEERRRENP. S542 is subject to Phosphoserine.

It belongs to the actin family. ARP5 subfamily. In terms of assembly, component of the INO80 chromatin-remodeling complex. Interacts with EEN. Expressed ubiquitously in seedlings, roots, leaves, buds, flowers and siliques.

It is found in the nucleus. Its subcellular location is the nucleoplasm. The protein localises to the cytoplasm. Its function is as follows. Probable subunit of a chromatin-remodeling complex. Involved in DNA repair. Required for multicellular development of all organs. The polypeptide is Actin-related protein 5 (Arabidopsis thaliana (Mouse-ear cress)).